Here is a 196-residue protein sequence, read N- to C-terminus: Charged multivesicular body protein 1a (196 aa).

An N-acetylmethionine modification is found at Met1. Positions 5 to 47 (LFQLKFTAKQLEKLAKKAEKDSKAEQAKVKKALLQKNVECARV) form a coiled coil. Ser101 is subject to Phosphoserine. The stretch at 102–124 (TMDLQKVSSVMDRFEQQVQNLDV) forms a coiled coil. Residue Ser173 is modified to Phosphoserine. A disordered region spans residues 173-196 (SAVGESSVRSQEDQLSRRLAALRN). The short motif at 185 to 195 (DQLSRRLAALR) is the MIT-interacting motif element.

The protein belongs to the SNF7 family. As to quaternary structure, probable peripherally associated component of the endosomal sorting required for transport complex III (ESCRT-III). ESCRT-III components are thought to multimerize to form a flat lattice on the perimeter membrane of the endosome. Several assembly forms of ESCRT-III may exist that interact and act sequentially. Self-associates. Interacts with CHMP1B. Interacts with VPS4A. Interacts with VPS4B. Interacts with PHF1. Interacts with IST1. Interacts with MITD1. Expressed in placenta, cultured skin fibroblasts and in osteoblast cell line MG-63.

It is found in the cytoplasm. Its subcellular location is the endosome membrane. The protein resides in the nucleus matrix. Its function is as follows. Probable peripherally associated component of the endosomal sorting required for transport complex III (ESCRT-III) which is involved in multivesicular bodies (MVBs) formation and sorting of endosomal cargo proteins into MVBs. MVBs contain intraluminal vesicles (ILVs) that are generated by invagination and scission from the limiting membrane of the endosome and mostly are delivered to lysosomes enabling degradation of membrane proteins, such as stimulated growth factor receptors, lysosomal enzymes and lipids. The MVB pathway appears to require the sequential function of ESCRT-O, -I,-II and -III complexes. ESCRT-III proteins mostly dissociate from the invaginating membrane before the ILV is released. The ESCRT machinery also functions in topologically equivalent membrane fission events, such as the terminal stages of cytokinesis and the budding of enveloped viruses (HIV-1 and other lentiviruses). ESCRT-III proteins are believed to mediate the necessary vesicle extrusion and/or membrane fission activities, possibly in conjunction with the AAA ATPase VPS4. Involved in cytokinesis. Involved in recruiting VPS4A and/or VPS4B to the midbody of dividing cells. May also be involved in chromosome condensation. Targets the Polycomb group (PcG) protein BMI1/PCGF4 to regions of condensed chromatin. May play a role in stable cell cycle progression and in PcG gene silencing. The protein is Charged multivesicular body protein 1a (CHMP1A) of Homo sapiens (Human).